We begin with the raw amino-acid sequence, 373 residues long: ATP phosphoribosyltransferase regulatory subunit (373 aa).

It belongs to the class-II aminoacyl-tRNA synthetase family. HisZ subfamily. In terms of assembly, heteromultimer composed of HisG and HisZ subunits.

It is found in the cytoplasm. Its pathway is amino-acid biosynthesis; L-histidine biosynthesis; L-histidine from 5-phospho-alpha-D-ribose 1-diphosphate: step 1/9. Required for the first step of histidine biosynthesis. May allow the feedback regulation of ATP phosphoribosyltransferase activity by histidine. This Rhizobium leguminosarum bv. trifolii (strain WSM2304) protein is ATP phosphoribosyltransferase regulatory subunit.